A 378-amino-acid chain; its full sequence is Regulatory protein E2 (378 aa).

Residues 1 to 200 (METLCQRLDA…ESIYCPDSVS (200 aa)) form a transactivation domain region. Low complexity-rich tracts occupy residues 221 to 230 (TYQTPTTSTP) and 268 to 278 (NRVNTNNTNNR). The interval 221 to 281 (TYQTPTTSTP…TNNTNNRQCL (61 aa)) is disordered. A DNA-binding domain region spans residues 297–378 (TTPVVHLKGE…VMGHMTGVDM (82 aa)). Lys304 is covalently cross-linked (Glycyl lysine isopeptide (Lys-Gly) (interchain with G-Cter in SUMO)).

The protein belongs to the papillomaviridae E2 protein family. In terms of assembly, binds DNA as homodimer. Interacts with protein E1; this interaction greatly increases E1 DNA-binding activity. Interacts with protein L1; this interaction enhances E2-dependent replication and transcription activation. Interacts with protein L2; this interaction inhibits E2 transcriptional activity but not DNA replication function E2. Interacts with protein E7; this interaction inhibits E7 oncogenic activity. Interacts with host TAF1; this interaction modulates E2-dependent transcriptional regulation. Interacts with host BRD4; this interaction mediates E2 transcriptional activation function. Additionally, the interaction with host BRD4 on mitotic chromosomes mediates tethering of the viral genome. Interacts with host TOPBP1; this interaction is required for optimal viral DNA replication. Phosphorylated. Post-translationally, sumoylation plays a regulatory role in E2 transcriptional activity.

The protein resides in the host nucleus. Functionally, plays a role in the initiation of viral DNA replication. A dimer of E2 interacts with a dimer of E1 in order to improve specificity of E1 DNA binding activity. Once the complex recognizes and binds DNA at specific sites, the E2 dimer is removed from DNA. E2 also regulates viral transcription through binding to the E2RE response element (5'-ACCNNNNNNGGT-3') present in multiple copies in the regulatory regions of the viral genome. Activates or represses transcription depending on E2RE's position with regards to proximal promoter elements including the TATA-box. Repression occurs by sterically hindering the assembly of the transcription initiation complex. The protein is Regulatory protein E2 of Homo sapiens (Human).